Consider the following 177-residue polypeptide: Large ribosomal subunit protein uL6 (177 aa).

It belongs to the universal ribosomal protein uL6 family. In terms of assembly, part of the 50S ribosomal subunit.

In terms of biological role, this protein binds to the 23S rRNA, and is important in its secondary structure. It is located near the subunit interface in the base of the L7/L12 stalk, and near the tRNA binding site of the peptidyltransferase center. This Polynucleobacter necessarius subsp. necessarius (strain STIR1) protein is Large ribosomal subunit protein uL6.